A 185-amino-acid polypeptide reads, in one-letter code: UPF0397 protein PAM_019 (185 aa).

The next 5 membrane-spanning stretches (helical) occupy residues 13–33, 42–62, 69–89, 109–129, and 143–163; these read IGLS…PVGF, AFLA…VGLI, FILF…IGFI, IVYF…FFAP, and VYLQ…VVGI.

Belongs to the UPF0397 family.

The protein resides in the cell membrane. This chain is UPF0397 protein PAM_019, found in Onion yellows phytoplasma (strain OY-M).